The following is a 204-amino-acid chain: Protein OPG030 (204 aa).

A BACK domain is found at F95–I177.

The protein belongs to the orthopoxvirus OPG030 family.

The chain is Protein OPG030 (OPG30) from Bos taurus (Bovine).